A 335-amino-acid polypeptide reads, in one-letter code: Glyoxylate reductase (335 aa).

NADP(+)-binding positions include 159–162 (MGRI), 181–183 (SRS), and 240–242 (TGR). Residues R242 and E271 contribute to the active site. The active-site Proton donor is the H290. 290–292 (HAA) serves as a coordination point for NADP(+).

This sequence belongs to the D-isomer specific 2-hydroxyacid dehydrogenase family. GyaR subfamily. In terms of assembly, homodimer.

Its subcellular location is the cytoplasm. It carries out the reaction glycolate + NAD(+) = glyoxylate + NADH + H(+). The polypeptide is Glyoxylate reductase (Aeropyrum pernix (strain ATCC 700893 / DSM 11879 / JCM 9820 / NBRC 100138 / K1)).